The following is a 432-amino-acid chain: Adenylosuccinate synthetase 1 (432 aa).

GTP-binding positions include 12-18 and 40-42; these read GDEGKGR and GHT. Catalysis depends on Asp13, which acts as the Proton acceptor. Residues Asp13 and Gly40 each coordinate Mg(2+). Residues 13 to 16, 38 to 41, Thr128, Arg142, Gln222, Thr237, and Arg301 contribute to the IMP site; these read DEGK and NAGH. Catalysis depends on His41, which acts as the Proton donor. Substrate is bound at residue 297–303; that stretch reads TNTGRPR. Residues Arg303, 329–331, and 411–413 each bind GTP; these read KLD and STG.

This sequence belongs to the adenylosuccinate synthetase family. Homodimer. It depends on Mg(2+) as a cofactor.

The protein resides in the cytoplasm. It catalyses the reaction IMP + L-aspartate + GTP = N(6)-(1,2-dicarboxyethyl)-AMP + GDP + phosphate + 2 H(+). Its pathway is purine metabolism; AMP biosynthesis via de novo pathway; AMP from IMP: step 1/2. Plays an important role in the de novo pathway of purine nucleotide biosynthesis. Catalyzes the first committed step in the biosynthesis of AMP from IMP. This Chromobacterium violaceum (strain ATCC 12472 / DSM 30191 / JCM 1249 / CCUG 213 / NBRC 12614 / NCIMB 9131 / NCTC 9757 / MK) protein is Adenylosuccinate synthetase 1.